We begin with the raw amino-acid sequence, 706 residues long: Glutamine-dependent NAD(+) synthetase (706 aa).

The CN hydrolase domain maps to 5-275 (VTVATCALNQ…VEVLTATLDL (271 aa)). The active-site Proton acceptor; for glutaminase activity is Glu-45. The active-site For glutaminase activity is the Lys-114. Cys-175 acts as the Nucleophile; for glutaminase activity in catalysis. A ligase region spans residues 325-706 (YHSPEEEISL…AAPQSLDGVD (382 aa)). 355 to 362 (PLSGGVDS) provides a ligand contact to ATP. Ser-357 is an active-site residue.

In the C-terminal section; belongs to the NAD synthetase family. As to quaternary structure, homohexamer.

It catalyses the reaction deamido-NAD(+) + L-glutamine + ATP + H2O = L-glutamate + AMP + diphosphate + NAD(+) + H(+). Its pathway is cofactor biosynthesis; NAD(+) biosynthesis; NAD(+) from deamido-NAD(+) (L-Gln route): step 1/1. Functionally, catalyzes the final step of the nicotinamide adenine dinucleotide (NAD) de novo synthesis pathway, the ATP-dependent amidation of deamido-NAD using L-glutamine as a nitrogen source. This Macaca fascicularis (Crab-eating macaque) protein is Glutamine-dependent NAD(+) synthetase (NADSYN1).